Here is a 25-residue protein sequence, read N- to C-terminus: Caerin-1.19 (25 aa).

Leu-25 carries the post-translational modification Leucine amide.

Belongs to the frog skin active peptide (FSAP) family. Caerin subfamily. Expressed by the skin dorsal glands.

The protein resides in the secreted. Its function is as follows. Caerin-1.19 shows significant activity against Gram-positive organisms, but is less effective against Gram-negative organisms. This Ranoidea gracilenta (Dainty green tree frog) protein is Caerin-1.19.